The primary structure comprises 360 residues: Phospho-N-acetylmuramoyl-pentapeptide-transferase (360 aa).

Transmembrane regions (helical) follow at residues 21–41 (YVTF…LWWG), 74–94 (MGGI…GDLA), 97–117 (YVWV…IDDY), 135–155 (ILQS…ADLV), 168–188 (IMPQ…VGSS), 199–219 (GLAI…AYLS), 236–256 (AGEL…FLWF), 263–283 (VFMG…IAVL), 288–308 (ILLV…ILQV), and 338–358 (VIVR…ATLK).

This sequence belongs to the glycosyltransferase 4 family. MraY subfamily. The cofactor is Mg(2+).

The protein localises to the cell inner membrane. It carries out the reaction UDP-N-acetyl-alpha-D-muramoyl-L-alanyl-gamma-D-glutamyl-meso-2,6-diaminopimeloyl-D-alanyl-D-alanine + di-trans,octa-cis-undecaprenyl phosphate = di-trans,octa-cis-undecaprenyl diphospho-N-acetyl-alpha-D-muramoyl-L-alanyl-D-glutamyl-meso-2,6-diaminopimeloyl-D-alanyl-D-alanine + UMP. Its pathway is cell wall biogenesis; peptidoglycan biosynthesis. Catalyzes the initial step of the lipid cycle reactions in the biosynthesis of the cell wall peptidoglycan: transfers peptidoglycan precursor phospho-MurNAc-pentapeptide from UDP-MurNAc-pentapeptide onto the lipid carrier undecaprenyl phosphate, yielding undecaprenyl-pyrophosphoryl-MurNAc-pentapeptide, known as lipid I. The chain is Phospho-N-acetylmuramoyl-pentapeptide-transferase from Shewanella sediminis (strain HAW-EB3).